Here is a 334-residue protein sequence, read N- to C-terminus: MSSAPVLAHTREELATLLAAARARGEQVGLVPTMGALHEGHASLVRAARERVTDDGRMGPVVVSVFVNPLQFGANEDLDRYPRTLEADLEVCAREGADIVFAPSVDEVYPGGPPQVTVRPGPLGKILEGKVRPGHFRGVLTVVAKLFGLVRPDVAVFGQKDYQQLALIRRMVLDLALGVEIVAAETVREDDGLALSSRNRYLEPEQREQAVALSRALLAAQENAGYGAEVALDEARAELRAAPGVDLDYLVITDPDLDELPAVVPPGTPARILVAARVGGTRLIDNLPLMLGTRGPAGEASPPNRERSEPGSAEQNKSPGEARTTPSGTSEASE.

Residue 34–41 (MGALHEGH) coordinates ATP. The active-site Proton donor is the His-41. A (R)-pantoate-binding site is contributed by Gln-71. Position 71 (Gln-71) interacts with beta-alanine. ATP is bound at residue 158-161 (GQKD). Gln-164 provides a ligand contact to (R)-pantoate. ATP-binding positions include Val-187 and 195 to 198 (LSSR). The segment at 288–334 (PLMLGTRGPAGEASPPNRERSEPGSAEQNKSPGEARTTPSGTSEASE) is disordered. Positions 313–334 (AEQNKSPGEARTTPSGTSEASE) are enriched in polar residues.

This sequence belongs to the pantothenate synthetase family. Homodimer.

It localises to the cytoplasm. It catalyses the reaction (R)-pantoate + beta-alanine + ATP = (R)-pantothenate + AMP + diphosphate + H(+). It functions in the pathway cofactor biosynthesis; (R)-pantothenate biosynthesis; (R)-pantothenate from (R)-pantoate and beta-alanine: step 1/1. In terms of biological role, catalyzes the condensation of pantoate with beta-alanine in an ATP-dependent reaction via a pantoyl-adenylate intermediate. This Nocardioides sp. (strain ATCC BAA-499 / JS614) protein is Pantothenate synthetase.